The sequence spans 665 residues: DNA mismatch repair protein MutL (665 aa).

It belongs to the DNA mismatch repair MutL/HexB family.

In terms of biological role, this protein is involved in the repair of mismatches in DNA. It is required for dam-dependent methyl-directed DNA mismatch repair. May act as a 'molecular matchmaker', a protein that promotes the formation of a stable complex between two or more DNA-binding proteins in an ATP-dependent manner without itself being part of a final effector complex. In Acidobacterium capsulatum (strain ATCC 51196 / DSM 11244 / BCRC 80197 / JCM 7670 / NBRC 15755 / NCIMB 13165 / 161), this protein is DNA mismatch repair protein MutL.